A 1265-amino-acid polypeptide reads, in one-letter code: Shugoshin 2 (1265 aa).

Positions 69–116 form a coiled coil; it reads KENSRRITTEKMLLQKEVEKLNFENTFLRLKLNNLNKKLIDIEALMNN. Disordered regions lie at residues 161–202, 230–287, 305–339, and 381–447; these read LTSN…STQD, DVPP…NLSA, LNCN…SARE, and GIKK…GAED. The span at 190 to 202 shows a compositional bias: polar residues; the sequence is SSGSTTQPLSTQD. Residues 232–242 show a composition bias toward basic and acidic residues; the sequence is PPRESHSHSDQ. Positions 305–322 are enriched in polar residues; the sequence is LNCNNEINGHTNETNTEM. Composition is skewed to basic and acidic residues over residues 389 to 410 and 425 to 446; these read KTNE…EKKR and IGEK…RGAE. Residues 452 to 476 adopt a coiled-coil conformation; it reads FNNEQLAQMNEQLAQVNELKKMTLQ. The interval 499–526 is disordered; it reads EQEETYSLSQSSGKFHQESKFDKGQNSL. The segment covering 503 to 512 has biased composition (polar residues); sequence TYSLSQSSGK. Residues 603–626 adopt a coiled-coil conformation; sequence EQNESNINKLRKKVNRKTEIISGM. The span at 1073–1083 shows a compositional bias: basic residues; it reads NKMTSKSKKRK. The disordered stretch occupies residues 1073–1093; it reads NKMTSKSKKRKTSIDPSPESH. Phosphoserine is present on Ser-1144. A disordered region spans residues 1200 to 1265; the sequence is KVNRRTQKSG…EPSLRDKMRR (66 aa). Polar residues predominate over residues 1217–1230; the sequence is DLSNTSFVSNNTAE. Residues 1231-1243 show a composition bias toward basic and acidic residues; sequence SENKSEDLSSERT.

It belongs to the shugoshin family. As to quaternary structure, part of an astrin (SPAG5) -kinastrin (SKAP) complex containing KNSTRN, SPAG5, PLK1, DYNLL1 and SGO2. Interacts with CDCA8. Directly interacts with PPP2CA.

The protein resides in the nucleus. Its subcellular location is the chromosome. It is found in the centromere. It localises to the kinetochore. Its function is as follows. Cooperates with PPP2CA to protect centromeric cohesin from separase-mediated cleavage in oocytes specifically during meiosis I. Has a crucial role in protecting REC8 at centromeres from cleavage by separase. During meiosis, protects centromeric cohesion complexes until metaphase II/anaphase II transition, preventing premature release of meiosis-specific REC8 cohesin complexes from anaphase I centromeres. Is thus essential for an accurate gametogenesis. May act by targeting PPP2CA to centromeres, thus leading to cohesin dephosphorylation. Essential for recruiting KIF2C to the inner centromere and for correcting defective kinetochore attachments. Involved in centromeric enrichment of AUKRB in prometaphase. The polypeptide is Shugoshin 2 (Homo sapiens (Human)).